A 1001-amino-acid chain; its full sequence is Translation initiation factor IF-2 (1001 aa).

The disordered stretch occupies residues 34–404 (KSHSSTISES…SRGDRRDRKE (371 aa)). Positions 67–80 (SRPESKEDKSDPKQ) are enriched in basic and acidic residues. 3 stretches are compositionally biased toward pro residues: residues 98–107 (PARPTPPPRP), 147–157 (PTQPLAPPPVP), and 163–172 (PSKPAPPTPP). Positions 173–190 (AKKAAPAPRLAGPPGRTA) are enriched in low complexity. Composition is skewed to basic and acidic residues over residues 212–230 (SLKDNRGQARSPGDREEKV) and 238–252 (PKPKVELRRPKPPRP). The segment covering 332 to 342 (DDDDDDLDIDG) has biased composition (acidic residues). Composition is skewed to low complexity over residues 362–371 (KSLAAKPSTP) and 385–394 (AGSSAGGSSR). Over residues 395-404 (SRGDRRDRKE) the composition is skewed to basic and acidic residues. One can recognise a tr-type G domain in the interval 493–666 (RRPPVVTIMG…LLVSEVEELV (174 aa)). Positions 502–509 (GHVDHGKT) are G1. 502–509 (GHVDHGKT) contacts GTP. The segment at 527–531 (GITQH) is G2. Residues 552–555 (DTPG) form a G3 region. GTP is bound by residues 552-556 (DTPGH) and 606-609 (NKVD). A G4 region spans residues 606 to 609 (NKVD). The G5 stretch occupies residues 642-644 (SAL).

The protein belongs to the TRAFAC class translation factor GTPase superfamily. Classic translation factor GTPase family. IF-2 subfamily.

It is found in the cytoplasm. One of the essential components for the initiation of protein synthesis. Protects formylmethionyl-tRNA from spontaneous hydrolysis and promotes its binding to the 30S ribosomal subunits. Also involved in the hydrolysis of GTP during the formation of the 70S ribosomal complex. This Synechocystis sp. (strain ATCC 27184 / PCC 6803 / Kazusa) protein is Translation initiation factor IF-2 (infB).